The sequence spans 158 residues: UPF0758 protein YkfG (158 aa).

One can recognise an MPN domain in the interval 36–158; it reads AFTSTHAVRE…IYSFAEHGLL (123 aa). The Zn(2+) site is built by histidine 107, histidine 109, and aspartate 120. The JAMM motif motif lies at 107–120; that stretch reads HNHPSGETTPSQAD.

Belongs to the UPF0758 family.

The polypeptide is UPF0758 protein YkfG (ykfG) (Escherichia coli (strain K12)).